The sequence spans 496 residues: UDP-N-acetylmuramoyl-L-alanyl-D-glutamate--2,6-diaminopimelate ligase (496 aa).

Leu24 and Ser26 together coordinate UDP-N-acetyl-alpha-D-muramoyl-L-alanyl-D-glutamate. Position 109 to 115 (109 to 115 (GTNGKTS)) interacts with ATP. UDP-N-acetyl-alpha-D-muramoyl-L-alanyl-D-glutamate contacts are provided by residues 151–152 (TT), Ser178, Gln184, and Arg186. Position 218 is an N6-carboxylysine (Lys218). Residues Arg387, 411 to 414 (DNPR), Gly462, and Glu466 each bind meso-2,6-diaminopimelate. The Meso-diaminopimelate recognition motif signature appears at 411 to 414 (DNPR).

Belongs to the MurCDEF family. MurE subfamily. Mg(2+) serves as cofactor. Carboxylation is probably crucial for Mg(2+) binding and, consequently, for the gamma-phosphate positioning of ATP.

It localises to the cytoplasm. It catalyses the reaction UDP-N-acetyl-alpha-D-muramoyl-L-alanyl-D-glutamate + meso-2,6-diaminopimelate + ATP = UDP-N-acetyl-alpha-D-muramoyl-L-alanyl-gamma-D-glutamyl-meso-2,6-diaminopimelate + ADP + phosphate + H(+). The protein operates within cell wall biogenesis; peptidoglycan biosynthesis. Catalyzes the addition of meso-diaminopimelic acid to the nucleotide precursor UDP-N-acetylmuramoyl-L-alanyl-D-glutamate (UMAG) in the biosynthesis of bacterial cell-wall peptidoglycan. This is UDP-N-acetylmuramoyl-L-alanyl-D-glutamate--2,6-diaminopimelate ligase from Pseudomonas putida (strain ATCC 47054 / DSM 6125 / CFBP 8728 / NCIMB 11950 / KT2440).